Reading from the N-terminus, the 230-residue chain is Large ribosomal subunit protein uL1 (230 aa).

This sequence belongs to the universal ribosomal protein uL1 family. Part of the 50S ribosomal subunit.

Its function is as follows. Binds directly to 23S rRNA. The L1 stalk is quite mobile in the ribosome, and is involved in E site tRNA release. Protein L1 is also a translational repressor protein, it controls the translation of the L11 operon by binding to its mRNA. In Caldicellulosiruptor bescii (strain ATCC BAA-1888 / DSM 6725 / KCTC 15123 / Z-1320) (Anaerocellum thermophilum), this protein is Large ribosomal subunit protein uL1.